The following is a 144-amino-acid chain: Ribonuclease VapC1 (144 aa).

Residues 6–132 enclose the PINc domain; the sequence is VFVDGNVIVD…SFYSPDIEVL (127 aa). Residues Asp-9 and Asp-102 each contribute to the Mg(2+) site.

Belongs to the PINc/VapC protein family. Mg(2+) is required as a cofactor.

In terms of biological role, toxic component of a type II toxin-antitoxin (TA) system. An RNase. The polypeptide is Ribonuclease VapC1 (Aquifex aeolicus (strain VF5)).